Consider the following 559-residue polypeptide: Forkhead box protein O6 (559 aa).

Disordered regions lie at residues 1–77 (MAAK…VGPL) and 163–183 (SWWMLNPEGGKTGKTPRRRAV). Residues 88-182 (WGNLSYADLI…KTGKTPRRRA (95 aa)) constitute a DNA-binding region (fork-head). Ser184 is subject to Phosphoserine. Disordered stretches follow at residues 197 to 232 (KASKKKQLHLPERSPDDSPPGAPVPGPLSASAKWAA) and 534 to 559 (NFDSALPPPPPGLAGAPPPNQSWVPG). Pro residues-rich tracts occupy residues 213–222 (DSPPGAPVPG) and 539–553 (LPPPPPGLAGAPPPN).

Phosphorylation of Ser-184 is be important in regulating the transacriptional activity. Expressed in brain in areas of the nucleus accumbens, cingulate cortex, parts of the amygdala and in the hippocampus.

It is found in the cytoplasm. The protein resides in the nucleus. Transcriptional activator. This is Forkhead box protein O6 (Foxo6) from Mus musculus (Mouse).